Consider the following 752-residue polypeptide: Catalase-peroxidase (752 aa).

The interval 1–21 is disordered; that stretch reads MSNESKCPFHQTAGGGTTNRD. A cross-link (tryptophyl-tyrosyl-methioninium (Trp-Tyr) (with M-271)) is located at residues 91–245; that stretch reads WHSAGTYRIG…LAAVQMGLIY (155 aa). The Proton acceptor role is filled by His92. The interval 204–228 is disordered; sequence QAPGQGDLVAEPAKHGEEQNRDLSA. Positions 215–228 are enriched in basic and acidic residues; it reads PAKHGEEQNRDLSA. Positions 245–271 form a cross-link, tryptophyl-tyrosyl-methioninium (Tyr-Met) (with W-91); it reads YVNPEGPEGNPDPVASGKDIRETFGRM. His286 is a heme binding site. The segment at 366-391 is disordered; the sequence is AHQWQPKEGKGAGTVPDAHDPSKRHA.

The protein belongs to the peroxidase family. Peroxidase/catalase subfamily. In terms of assembly, homodimer or homotetramer. Requires heme b as cofactor. Formation of the three residue Trp-Tyr-Met cross-link is important for the catalase, but not the peroxidase activity of the enzyme.

The enzyme catalyses H2O2 + AH2 = A + 2 H2O. It catalyses the reaction 2 H2O2 = O2 + 2 H2O. In terms of biological role, bifunctional enzyme with both catalase and broad-spectrum peroxidase activity. The polypeptide is Catalase-peroxidase (Pseudomonas putida (strain W619)).